The primary structure comprises 223 residues: RNA-free ribonuclease P (223 aa).

It belongs to the HARP family.

It catalyses the reaction Endonucleolytic cleavage of RNA, removing 5'-extranucleotides from tRNA precursor.. Its function is as follows. RNA-free RNase P that catalyzes the removal of the 5'-leader sequence from pre-tRNA to produce the mature 5'-terminus. The polypeptide is RNA-free ribonuclease P (Methanococcus maripaludis (strain C7 / ATCC BAA-1331)).